Consider the following 576-residue polypeptide: MTIGTITSQVNYRAALNTLWASLMLEELVRMGVKQICIAPGSRSTSLTLAAVANNKLTIHTHFDERGLGFLALGIAKASQEPVAVVVTSGTAVANLLPAVAEAGLTGEKLVLLTSDRPVELIQCGANQAIVQHDIFSQHVTAFHDIPSPTLDISPAWLLSTIDEAMQLQQRQGRAIHFNCHYPEPLYGDDVDFSEYLAPVSEWKGDELPYVSHQQALAPHIAIDKRQWQSLTQRKGVVIVGRLAPEELGQVTLLAEKLGWPLLLDPQAGGSSAWAGFDVWLQNASCQAFLQQADTVIQFGARIVSKRLLQFIATSSIEHYWLIDPRAGRLDSTHRRSSRIQAPIGEWATCALSLTENSEHAGWAMPLQVVSERYFEMLGEYSDQLTELSLAVNLGAWLPDKTELFLGNSLIIRLLDMVGKLPSTATFANRGASGIDGLIATIAGINKARQAPMVGLLGDTSLLYDLNSLALLRDVSQPVVIIVTNNDGGGIFDLLPVPALQRDELYRMPHGLEFSHAAAMFGLAYYCPESLPQAEEQCLYALTQPKTTIIEIKTPAGEAGEMIKALFGKVKNATLL.

This sequence belongs to the TPP enzyme family. MenD subfamily. In terms of assembly, homodimer. Mg(2+) is required as a cofactor. It depends on Mn(2+) as a cofactor. The cofactor is thiamine diphosphate.

The catalysed reaction is isochorismate + 2-oxoglutarate + H(+) = 5-enolpyruvoyl-6-hydroxy-2-succinyl-cyclohex-3-ene-1-carboxylate + CO2. The protein operates within quinol/quinone metabolism; 1,4-dihydroxy-2-naphthoate biosynthesis; 1,4-dihydroxy-2-naphthoate from chorismate: step 2/7. Its pathway is quinol/quinone metabolism; menaquinone biosynthesis. Catalyzes the thiamine diphosphate-dependent decarboxylation of 2-oxoglutarate and the subsequent addition of the resulting succinic semialdehyde-thiamine pyrophosphate anion to isochorismate to yield 2-succinyl-5-enolpyruvyl-6-hydroxy-3-cyclohexene-1-carboxylate (SEPHCHC). This chain is 2-succinyl-5-enolpyruvyl-6-hydroxy-3-cyclohexene-1-carboxylate synthase, found in Photobacterium profundum (strain SS9).